The sequence spans 341 residues: Processive diacylglycerol beta-glycosyltransferase (341 aa).

Belongs to the glycosyltransferase 2 family. The cofactor is Mg(2+).

It is found in the cell membrane. The catalysed reaction is a 1,2-diacyl-sn-glycerol + UDP-alpha-D-glucose = a 1,2-diacyl-3-O-(beta-D-glucopyranosyl)-sn-glycerol + UDP + H(+). It catalyses the reaction a 1,2-diacyl-sn-glycerol + UDP-alpha-D-galactose = a 1,2-diacyl-3-O-(beta-D-galactosyl)-sn-glycerol + UDP + H(+). The enzyme catalyses a 1,2-diacyl-3-O-(beta-D-galactosyl)-sn-glycerol + UDP-alpha-D-glucose = a 1,2-diacyl-3-O-[beta-D-glucopyranosyl-(1-&gt;6)-beta-D-galactopyranosyl]-sn-glycerol + UDP + H(+). It carries out the reaction a 1,2-diacyl-3-O-(beta-D-galactosyl)-sn-glycerol + UDP-alpha-D-galactose = a 1,2-diacyl-3-O-[beta-D-galactosyl-(1-&gt;6)-beta-D-galactosyl]-sn-glycerol + UDP + H(+). Its activity is regulated as follows. Activated by the negatively charged lipid phosphatidylglycerol (PG). Processive glycosyltransferase involved in the biosynthesis of both the non-bilayer-prone beta-monoglycosyldiacylglycerol and the bilayer-forming membrane lipid glucosyl-galactosyldiacylglycerol and digalactosyl-diacylglycerol. These components contribute to regulate the properties and stability of the membrane. Catalyzes sequentially the transfers of glucosyl or galactosyl residues from UDP-Glc or UDP-Gal to diacylglycerol (DAG) acceptor to form the corresponding beta-glycosyl-DAG (3-O-(beta-D-glycopyranosyl)-1,2-diacyl-sn-glycerol). Then, only beta-galactosyl-DAG (3-O-(beta-D-galactopyranosyl)-1,2-diacyl-sn-glycerol) can act as acceptor to give the beta-glycosyl-beta-galactosyl-DAG product (3-O-(beta-D-glycopyranosyl-(1-&gt;6)-D-galactopyranosyl)-1,2-diacyl-sn-glycerol). It can also use alpha-Gal-beta-Gal-DAG, ceramide (Cer) and beta-Gal-Cer as sugar acceptors. The enzyme is supposed to be mainly a galactosyltransferase, with higher glycosyltransferase activity for the addition of the second glycosyl on beta-Gal-DAG as acceptor. The main glycolipid produced in vivo is beta-Glc-beta-Gal-DAG with a beta-1,6 linkage. The protein is Processive diacylglycerol beta-glycosyltransferase of Mycoplasma pneumoniae (strain ATCC 29342 / M129 / Subtype 1) (Mycoplasmoides pneumoniae).